The following is a 421-amino-acid chain: MQDSIEQYMQKVGQQARDASRVLTSASTSLKNHALSAIYTALENNQAAILAANQIDMEKGRSNQLDSALLDRLELTPARFKGMLQGLKDVIALVDPIGEITDLAYRPTGIQIGKMRVPLGVVGMIYESRPNVTLEAASLAIKSGNAIILRGGSEALESNKAIAEAVKHGLKVAGLPEHSVQVIETSDRAAVGHLITMAEYVDVIVPRGGKSLIERVTNEARIPVIKHLDGNCHVFVEAQADLQKALPITLNAKTHRYGVCNAMETLLVDEKIAEVFLPHIAELYAEKQVELRGCPETRRILGTTVKPATEEDWYTEYLGPILAVKVVSGIDEAIDHINKYGSHHTDAIVTENYTLARQFLARVDSSSVVVNASTRFADGFEYGLGAEIGISTDKIHARGPVGLEGLTSQKWIVLGDGQIRQ.

Belongs to the gamma-glutamyl phosphate reductase family.

It is found in the cytoplasm. It catalyses the reaction L-glutamate 5-semialdehyde + phosphate + NADP(+) = L-glutamyl 5-phosphate + NADPH + H(+). It functions in the pathway amino-acid biosynthesis; L-proline biosynthesis; L-glutamate 5-semialdehyde from L-glutamate: step 2/2. In terms of biological role, catalyzes the NADPH-dependent reduction of L-glutamate 5-phosphate into L-glutamate 5-semialdehyde and phosphate. The product spontaneously undergoes cyclization to form 1-pyrroline-5-carboxylate. This is Gamma-glutamyl phosphate reductase from Acinetobacter baumannii (strain ACICU).